Consider the following 870-residue polypeptide: MOG interacting and ectopic P-granules protein 1 (870 aa).

The disordered stretch occupies residues 1 to 244; it reads MVTADETVLA…VPEEDNNEQA (244 aa). The segment covering 9 to 20 has biased composition (polar residues); sequence LATTTNTTSMSV. Residues 41–51 are compositionally biased toward basic and acidic residues; it reads EQLKAEQREVM. Acidic residues-rich tracts occupy residues 77–99, 129–142, and 203–214; these read EVIE…DENG, IEQD…EITE, and IELDDDDDDEIQ. 2 C2H2-type zinc fingers span residues 421–444 and 450–473; these read HRCD…ENLH and FQCT…FETH. The CCHC-type zinc-finger motif lies at 486-508; sequence YPCAICEEDFNFKGVREQHYKQC. 2 stretches are compositionally biased toward polar residues: residues 673–688 and 695–708; these read LQAA…SQKT and KLVT…VGSS. A disordered region spans residues 673–708; that stretch reads LQAAVNSMRSQNSQKTPTHRSSKLVTTPSHATVGSS. 4 C2H2-type zinc fingers span residues 713-736, 753-776, 794-815, and 826-849; these read FVCE…QTTH, LACS…VMSH, GRCK…VADH, and YSCD…TSNH. The segment at 847–870 is disordered; that stretch reads SNHPKGDKKTSTPAKKDDCITLDD. The span at 850–870 shows a compositional bias: basic and acidic residues; sequence PKGDKKTSTPAKKDDCITLDD.

As to quaternary structure, interacts with hda-1, let-418, lin-1, mog-1, mog-4, mog-5, mog-6, pie-1 and unc-98. Sumoylated. In terms of tissue distribution, expressed in somatic cells of embryos, the head, hypodermis and tail of larvae and the germline of adults, including oocytes but not mature sperm and spermatocytes.

It is found in the nucleus. Has a broad role in development, specifically in the genetic pathway SynMuvB that negatively regulates specification of the vulval cell fate. Required for fem-3 3'-UTR-mediated repression in the regulation of the sperm/oocyte switch. Acts by regulating the translation of fem-3 mRNA, by binding to its 3'-UTR. This is MOG interacting and ectopic P-granules protein 1 from Caenorhabditis elegans.